The primary structure comprises 664 residues: Intraflagellar transport protein 70B (664 aa).

TPR repeat units lie at residues 11 to 44, 45 to 78, 153 to 186, 188 to 220, 385 to 418, 423 to 456, and 458 to 491; these read DGEF…SSRS, RAGL…HPEL, YDGQ…SGYQ, DLSY…GIRQ, LTEQ…YDET, IPVL…CNDH, and VWKL…NYDN. Residues 507–534 adopt a coiled-coil conformation; the sequence is YIMTSQNEEAEELMRKIEKEEEQLSYGD. Residues 543-576 form a TPR 8 repeat; the sequence is CIVNLVIGTLYCAKGNYDFGISRVIKSLEPYHKK.

It belongs to the TTC30/dfy-1/fleer family. As to quaternary structure, interacts with the IFT B complex components IFT27, IFT46, IFT74, IFT52, IFT57, IFT80, IFT81 and IFT88. Interacts with KIF17.

The protein resides in the cell projection. It is found in the cilium. Its function is as follows. Required for polyglutamylation of axonemal tubulin. Plays a role in anterograde intraflagellar transport (IFT), the process by which cilia precursors are transported from the base of the cilium to the site of their incorporation at the tip. The chain is Intraflagellar transport protein 70B (Ift70b) from Mus musculus (Mouse).